A 96-amino-acid polypeptide reads, in one-letter code: DNA-directed RNA polymerase subunit Rpo11 (96 aa).

It belongs to the archaeal Rpo11/eukaryotic RPB11/RPC19 RNA polymerase subunit family. In terms of assembly, part of the RNA polymerase complex.

The protein resides in the cytoplasm. It carries out the reaction RNA(n) + a ribonucleoside 5'-triphosphate = RNA(n+1) + diphosphate. Functionally, DNA-dependent RNA polymerase (RNAP) catalyzes the transcription of DNA into RNA using the four ribonucleoside triphosphates as substrates. This Methanococcus maripaludis (strain C6 / ATCC BAA-1332) protein is DNA-directed RNA polymerase subunit Rpo11.